Here is a 68-residue protein sequence, read N- to C-terminus: Beta-defensin 1 (68 aa).

A signal peptide spans 1 to 21 (MRTSYLLLFTLCLLLSEMASG). A propeptide spanning residues 22-32 (DNFLTGLGHRS) is cleaved from the precursor. 3 disulfides stabilise this stretch: C37–C66, C44–C59, and C49–C67.

This sequence belongs to the beta-defensin family. As to quaternary structure, monomer. Homodimer.

The protein resides in the secreted. Its subcellular location is the membrane. Has bactericidal activity. May act as a ligand for C-C chemokine receptor CCR6. Positively regulates the sperm motility and bactericidal activity in a CCR6-dependent manner. Binds to CCR6 and triggers Ca2+ mobilization in the sperm which is important for its motility. The polypeptide is Beta-defensin 1 (DEFB1) (Hylobates moloch (Silvery gibbon)).